The sequence spans 228 residues: Biosynthetic peptidoglycan transglycosylase (228 aa).

Residues 8-28 traverse the membrane as a helical segment; it reads GVAALLALFLLYQLWIFGHIV.

This sequence belongs to the glycosyltransferase 51 family.

It localises to the cell inner membrane. The enzyme catalyses [GlcNAc-(1-&gt;4)-Mur2Ac(oyl-L-Ala-gamma-D-Glu-L-Lys-D-Ala-D-Ala)](n)-di-trans,octa-cis-undecaprenyl diphosphate + beta-D-GlcNAc-(1-&gt;4)-Mur2Ac(oyl-L-Ala-gamma-D-Glu-L-Lys-D-Ala-D-Ala)-di-trans,octa-cis-undecaprenyl diphosphate = [GlcNAc-(1-&gt;4)-Mur2Ac(oyl-L-Ala-gamma-D-Glu-L-Lys-D-Ala-D-Ala)](n+1)-di-trans,octa-cis-undecaprenyl diphosphate + di-trans,octa-cis-undecaprenyl diphosphate + H(+). It participates in cell wall biogenesis; peptidoglycan biosynthesis. Its function is as follows. Peptidoglycan polymerase that catalyzes glycan chain elongation from lipid-linked precursors. The polypeptide is Biosynthetic peptidoglycan transglycosylase (Laribacter hongkongensis (strain HLHK9)).